The following is a 377-amino-acid chain: Cobalt-precorrin-5B C(1)-methyltransferase (377 aa).

It belongs to the CbiD family.

It carries out the reaction Co-precorrin-5B + S-adenosyl-L-methionine = Co-precorrin-6A + S-adenosyl-L-homocysteine. The protein operates within cofactor biosynthesis; adenosylcobalamin biosynthesis; cob(II)yrinate a,c-diamide from sirohydrochlorin (anaerobic route): step 6/10. Its function is as follows. Catalyzes the methylation of C-1 in cobalt-precorrin-5B to form cobalt-precorrin-6A. The protein is Cobalt-precorrin-5B C(1)-methyltransferase of Alkaliphilus metalliredigens (strain QYMF).